Here is a 326-residue protein sequence, read N- to C-terminus: Eukaryotic translation initiation factor 3 subunit I (326 aa).

WD repeat units lie at residues G8–T47, G50–S89, M145–D184, D188–T227, and G285–E326.

Belongs to the eIF-3 subunit I family. Component of the eukaryotic translation initiation factor 3 (eIF-3) complex. The eIF-3 complex interacts with pix.

Its subcellular location is the cytoplasm. Component of the eukaryotic translation initiation factor 3 (eIF-3) complex, which is involved in protein synthesis of a specialized repertoire of mRNAs and, together with other initiation factors, stimulates binding of mRNA and methionyl-tRNAi to the 40S ribosome. The eIF-3 complex specifically targets and initiates translation of a subset of mRNAs involved in cell proliferation. The protein is Eukaryotic translation initiation factor 3 subunit I of Drosophila erecta (Fruit fly).